We begin with the raw amino-acid sequence, 217 residues long: UPF0502 protein VF_A0604 (217 aa).

The protein belongs to the UPF0502 family.

The protein is UPF0502 protein VF_A0604 of Aliivibrio fischeri (strain ATCC 700601 / ES114) (Vibrio fischeri).